The chain runs to 374 residues: Peptidoglycan recognition protein 4 (374 aa).

The signal sequence occupies residues 1 to 20; the sequence is MLSWLLVFSILVLLAQGVSS. N-linked (GlcNAc...) asparagine glycans are attached at residues asparagine 39, asparagine 93, and asparagine 146. 2 N-acetylmuramoyl-L-alanine amidase domains span residues 76–212 and 233–359; these read RPVD…KACP and PAKY…LSPG. 3 disulfide bridges follow: cysteine 211/cysteine 333, cysteine 227/cysteine 271, and cysteine 247/cysteine 253. A peptidoglycan-binding site is contributed by tyrosine 275. Interaction with murein regions lie at residues 294-303 and 354-355; these read QGSKTDSYND and NT.

This sequence belongs to the N-acetylmuramoyl-L-alanine amidase 2 family. Homodimer; disulfide-linked. Heterodimer with PGLYRP3; disulfide-linked. Ubiquitous.

It is found in the secreted. Functionally, pattern receptor that binds to murein peptidoglycans (PGN) of Gram-positive bacteria. Has bactericidal activity towards Gram-positive bacteria. May kill Gram-positive bacteria by interfering with peptidoglycan biosynthesis. Also binds to Gram-negative bacteria, and has bacteriostatic activity towards Gram-negative bacteria. Plays a role in innate immunity. The polypeptide is Peptidoglycan recognition protein 4 (Pglyrp4) (Mus musculus (Mouse)).